A 427-amino-acid chain; its full sequence is Glucose-6-phosphate isomerase (427 aa).

E277 serves as the catalytic Proton donor. Residues H298 and K414 contribute to the active site.

The protein belongs to the GPI family.

The protein localises to the cytoplasm. It carries out the reaction alpha-D-glucose 6-phosphate = beta-D-fructose 6-phosphate. Its pathway is carbohydrate biosynthesis; gluconeogenesis. It participates in carbohydrate degradation; glycolysis; D-glyceraldehyde 3-phosphate and glycerone phosphate from D-glucose: step 2/4. In terms of biological role, catalyzes the reversible isomerization of glucose-6-phosphate to fructose-6-phosphate. The protein is Glucose-6-phosphate isomerase of Mycoplasma capricolum subsp. capricolum (strain California kid / ATCC 27343 / NCTC 10154).